A 92-amino-acid chain; its full sequence is MARSVWKGPFVDGYLLTKAEKVRESGRNEVIKIWSRRSTILPQFVGLTFGVYNGSKHVPVSVNEDMVGHKFGEFSPTRTYYGHGADKKAKRK.

This sequence belongs to the universal ribosomal protein uS19 family.

Functionally, protein S19 forms a complex with S13 that binds strongly to the 16S ribosomal RNA. The chain is Small ribosomal subunit protein uS19 from Agrobacterium fabrum (strain C58 / ATCC 33970) (Agrobacterium tumefaciens (strain C58)).